A 489-amino-acid polypeptide reads, in one-letter code: N-succinylglutamate 5-semialdehyde dehydrogenase (489 aa).

An NAD(+)-binding site is contributed by 223–228 (GSSNTG). Catalysis depends on residues Glu-246 and Cys-280.

Belongs to the aldehyde dehydrogenase family. AstD subfamily.

The enzyme catalyses N-succinyl-L-glutamate 5-semialdehyde + NAD(+) + H2O = N-succinyl-L-glutamate + NADH + 2 H(+). The protein operates within amino-acid degradation; L-arginine degradation via AST pathway; L-glutamate and succinate from L-arginine: step 4/5. Catalyzes the NAD-dependent reduction of succinylglutamate semialdehyde into succinylglutamate. This is N-succinylglutamate 5-semialdehyde dehydrogenase from Idiomarina loihiensis (strain ATCC BAA-735 / DSM 15497 / L2-TR).